The primary structure comprises 294 residues: Cyclin-G1 (294 aa).

This sequence belongs to the cyclin family. Cyclin G subfamily.

Its subcellular location is the nucleus. May play a role in growth regulation. Is associated with G2/M phase arrest in response to DNA damage. May be an intermediate by which p53 mediates its role as an inhibitor of cellular proliferation. In Rattus norvegicus (Rat), this protein is Cyclin-G1 (Ccng1).